Here is a 445-residue protein sequence, read N- to C-terminus: Argininosuccinate synthase (445 aa).

ATP-binding positions include 17–25 and alanine 43; that span reads AFSGGLDTS. Position 99 (tyrosine 99) interacts with L-citrulline. 2 residues coordinate ATP: glycine 129 and threonine 131. 3 residues coordinate L-aspartate: threonine 131, asparagine 135, and aspartate 136. Asparagine 135 is a binding site for L-citrulline. Aspartate 136 is an ATP binding site. L-citrulline contacts are provided by arginine 139 and serine 192. An ATP-binding site is contributed by aspartate 194. Residues threonine 201, glutamate 203, and glutamate 280 each coordinate L-citrulline.

This sequence belongs to the argininosuccinate synthase family. Type 2 subfamily. In terms of assembly, homotetramer.

The protein resides in the cytoplasm. It catalyses the reaction L-citrulline + L-aspartate + ATP = 2-(N(omega)-L-arginino)succinate + AMP + diphosphate + H(+). The protein operates within amino-acid biosynthesis; L-arginine biosynthesis; L-arginine from L-ornithine and carbamoyl phosphate: step 2/3. This Rhodopseudomonas palustris (strain BisA53) protein is Argininosuccinate synthase.